We begin with the raw amino-acid sequence, 469 residues long: Ribulose bisphosphate carboxylase large chain (469 aa).

The propeptide occupies 1-2 (MS). Proline 3 carries the N-acetylproline modification. Lysine 14 is modified (N6,N6,N6-trimethyllysine). Residues asparagine 123 and threonine 173 each coordinate substrate. The active-site Proton acceptor is the lysine 175. Position 177 (lysine 177) interacts with substrate. Residues lysine 201, aspartate 203, and glutamate 204 each contribute to the Mg(2+) site. The residue at position 201 (lysine 201) is an N6-carboxylysine. Histidine 294 acts as the Proton acceptor in catalysis. Positions 295, 327, and 379 each coordinate substrate.

It belongs to the RuBisCO large chain family. Type I subfamily. As to quaternary structure, heterohexadecamer of 8 large chains and 8 small chains; disulfide-linked. The disulfide link is formed within the large subunit homodimers. Mg(2+) serves as cofactor. The disulfide bond which can form in the large chain dimeric partners within the hexadecamer appears to be associated with oxidative stress and protein turnover.

The protein localises to the plastid. The protein resides in the chloroplast. It catalyses the reaction 2 (2R)-3-phosphoglycerate + 2 H(+) = D-ribulose 1,5-bisphosphate + CO2 + H2O. The catalysed reaction is D-ribulose 1,5-bisphosphate + O2 = 2-phosphoglycolate + (2R)-3-phosphoglycerate + 2 H(+). In terms of biological role, ruBisCO catalyzes two reactions: the carboxylation of D-ribulose 1,5-bisphosphate, the primary event in carbon dioxide fixation, as well as the oxidative fragmentation of the pentose substrate in the photorespiration process. Both reactions occur simultaneously and in competition at the same active site. This is Ribulose bisphosphate carboxylase large chain from Atriplex patula (Common orache).